A 157-amino-acid polypeptide reads, in one-letter code: MSAPFEERSGVVPCATPWGQWYQTLEEVFIEVQVPPGTRAQDIQCGLQSRHVALAVGGREILKGKLFDSTIADEGTWTLEDRKMVRIVLTKTKRDAANCWTSLLESEYAADPWVQDQMQRKLTLERFQKENPGFDFSGAEISGNYTKGGPDFSNLEK.

Residue S2 is modified to N-acetylserine. Positions 14–104 (CATPWGQWYQ…DAANCWTSLL (91 aa)) constitute a CS domain. The disordered stretch occupies residues 134–157 (FDFSGAEISGNYTKGGPDFSNLEK). The residue at position 142 (S142) is a Phosphoserine. Y145 is modified (phosphotyrosine).

In terms of assembly, interacts with LIS1.

It is found in the chromosome. The protein resides in the centromere. Its subcellular location is the kinetochore. It localises to the cytoplasm. The protein localises to the cytoskeleton. It is found in the microtubule organizing center. The protein resides in the centrosome. Its subcellular location is the spindle pole. May regulate the LIS1/dynein pathway by stabilizing LIS1 with Hsp90 chaperone. In Rattus norvegicus (Rat), this protein is NudC domain-containing protein 2 (Nudcd2).